Reading from the N-terminus, the 86-residue chain is Large ribosomal subunit protein bL31B (86 aa).

Belongs to the bacterial ribosomal protein bL31 family. Type B subfamily. In terms of assembly, part of the 50S ribosomal subunit.

This is Large ribosomal subunit protein bL31B from Vibrio parahaemolyticus serotype O3:K6 (strain RIMD 2210633).